Here is a 158-residue protein sequence, read N- to C-terminus: Protein EOLA2 (158 aa).

The ASCH domain occupies 6–92 (LSFRQPYAGF…IAGLVDIGET (87 aa)).

It belongs to the EOLA family.

In Homo sapiens (Human), this protein is Protein EOLA2.